The chain runs to 398 residues: E3 ubiquitin-protein ligase RSL1 (398 aa).

Residues 155-374 are TRIAD supradomain; sequence QKETCNICLN…LDLTQCCGSC (220 aa). Residues cysteine 159, cysteine 162, cysteine 183, cysteine 186, cysteine 246, cysteine 251, cysteine 271, cysteine 274, cysteine 279, cysteine 282, histidine 287, cysteine 292, cysteine 321, and cysteine 324 each coordinate Zn(2+). The RING-type 3; degenerate zinc-finger motif lies at 159–207; that stretch reads CNICLNDDINADQMFSVDKSGHMCCSECVKRHIEVRLLEGSLITCPHYR. An RING-type 1 zinc finger spans residues 159 to 208; the sequence is CNICLNDDINADQMFSVDKSGHMCCSECVKRHIEVRLLEGSLITCPHYRC. Residues 233–292 form an IBR-type zinc finger; sequence TKDELIPVMDRVYCPNPRCSTLMSETELSGLNIGVRRCCVKCGEPFCVKCKVSWHNNLSC. An RING-type 2; atypical zinc finger spans residues 321 to 349; sequence CSKCKHMIELSSGCISVVCRCGHTFCYQC. The RING-type 4; degenerate zinc finger occupies 321-356; sequence CSKCKHMIELSSGCISVVCRCGHTFCYQCGADAGDC. Cysteine 334 is an active-site residue. 6 residues coordinate Zn(2+): cysteine 339, cysteine 341, cysteine 346, cysteine 349, histidine 358, and cysteine 370. A helical membrane pass occupies residues 374 to 394; it reads CCCFVFFLVIIAIVVTIILLV.

Belongs to the RBR family. Interacts with the PYL4 and PYR1 ABA receptors at the plasma membrane. The cofactor is Zn(2+).

It is found in the cell membrane. The protein resides in the vacuole membrane. It carries out the reaction [E2 ubiquitin-conjugating enzyme]-S-ubiquitinyl-L-cysteine + [acceptor protein]-L-lysine = [E2 ubiquitin-conjugating enzyme]-L-cysteine + [acceptor protein]-N(6)-ubiquitinyl-L-lysine.. Its pathway is protein modification; protein ubiquitination. Acts as an E3 ubiquitin-protein ligase, or as part of E3 complex, which accepts ubiquitin from specific E2 ubiquitin-conjugating enzymes and then transfers it to substrates. Negative regulator of the abscisic acid (ABA) signaling pathway which targets PYL4 and PYR1 ABA receptors in plasma membrane to promote their FREE1/FYVE1-dependent trafficking and degradation upon ubiquitynation; this process involves clathrin-mediated endocytosis and trafficking through the ESCRT pathway. Involved in the maintenance of seed longevity. May enhance gibberellins responses. The polypeptide is E3 ubiquitin-protein ligase RSL1 (Arabidopsis thaliana (Mouse-ear cress)).